The chain runs to 290 residues: Protein male abnormal 3 (290 aa).

2 consecutive DNA-binding regions (DM) follow at residues 28 to 74 (CQRC…SKKK) and 94 to 142 (CARC…KLRR). 2 disordered regions span residues 139-167 (KLRR…MDME) and 179-202 (IIGT…LSMS). Residues 146-155 (KSRDGKEPKR) are compositionally biased toward basic and acidic residues. Positions 182-202 (TSASPSPSSTTDTMSPSLSMS) are enriched in low complexity.

In terms of tissue distribution, expression is undetectable in hermaphrodites, but persists in males. In males, expressed in cells of the tail tip.

It is found in the nucleus. In terms of biological role, transcription factor which binds the DNA motif 5'-[CGA][TCA][TA]ACAATGT[AT][TGA]C-3', probably as a monomer. Acts partially redundantly with the transcription factor dmd-3 to coordinate tail tip cell fusion and retraction and thereby regulate male tail tip morphogenesis. Promotes male-specific development of two tissues, the peripheral nervous system and the intestine. In the peripheral nervous system, directs differentiation of sensory ray neuroblasts into peripheral sense organs. In the intestine, causes repression of vitellogenin gene transcription. The chain is Protein male abnormal 3 from Caenorhabditis elegans.